The sequence spans 501 residues: Glucans biosynthesis protein G (501 aa).

Positions M1–A25 are cleaved as a signal peptide.

This sequence belongs to the OpgD/OpgG family.

It localises to the periplasm. It functions in the pathway glycan metabolism; osmoregulated periplasmic glucan (OPG) biosynthesis. Its function is as follows. Involved in the biosynthesis of osmoregulated periplasmic glucans (OPGs). The polypeptide is Glucans biosynthesis protein G (Rhodopseudomonas palustris (strain ATCC BAA-98 / CGA009)).